The following is a 192-amino-acid chain: Putative acetyltransferase YjbC (192 aa).

In terms of domain architecture, N-acetyltransferase spans 1–139 (MNWYEKLSEY…MEILYWSPKT (139 aa)).

It is found in the cytoplasm. The protein is Putative acetyltransferase YjbC (yjbC) of Bacillus subtilis (strain 168).